The following is a 246-amino-acid chain: Uridylate kinase (246 aa).

20-23 (KISG) is an ATP binding site. The segment at 28–33 (GDQGYG) is involved in allosteric activation by GTP. A UMP-binding site is contributed by glycine 62. ATP is bound by residues glycine 63 and arginine 67. UMP-binding positions include aspartate 82 and 143 to 150 (TGNPYFTT). ATP is bound by residues threonine 170, tyrosine 176, and aspartate 179.

It belongs to the UMP kinase family. In terms of assembly, homohexamer.

It localises to the cytoplasm. The catalysed reaction is UMP + ATP = UDP + ADP. It participates in pyrimidine metabolism; CTP biosynthesis via de novo pathway; UDP from UMP (UMPK route): step 1/1. Allosterically activated by GTP. Inhibited by UTP. Its function is as follows. Catalyzes the reversible phosphorylation of UMP to UDP. This Cereibacter sphaeroides (strain ATCC 17025 / ATH 2.4.3) (Rhodobacter sphaeroides) protein is Uridylate kinase.